The following is a 324-amino-acid chain: Putative exosome complex exonuclease RRP42 (324 aa).

Belongs to the RNase PH family. As to quaternary structure, component of the RNA exosome complex.

The protein resides in the nucleus. It localises to the nucleolus. The protein localises to the cytoplasm. Non-catalytic component of the RNA exosome complex which has 3'-&gt;5' exoribonuclease activity and participates in a multitude of cellular RNA processing and degradation events. This chain is Putative exosome complex exonuclease RRP42 (exosc7), found in Dictyostelium discoideum (Social amoeba).